We begin with the raw amino-acid sequence, 93 residues long: MKKPLILLAMVVALMILPFFINHGGEFGGSDGEAESQIQVVAPDYQPWFQPLYEPASGEIESLLFTLQGSLGAAVIFYILGYARGRQRRDDRV.

The next 2 helical transmembrane spans lie at leucine 5–glycine 25 and leucine 63–alanine 83.

It belongs to the CbiN family. As to quaternary structure, forms an energy-coupling factor (ECF) transporter complex composed of an ATP-binding protein (A component, CbiO), a transmembrane protein (T component, CbiQ) and 2 possible substrate-capture proteins (S components, CbiM and CbiN) of unknown stoichimetry.

The protein resides in the cell inner membrane. Its pathway is cofactor biosynthesis; adenosylcobalamin biosynthesis. In terms of biological role, part of the energy-coupling factor (ECF) transporter complex CbiMNOQ involved in cobalt import. The protein is Cobalt transport protein CbiN of Klebsiella pneumoniae (strain 342).